Reading from the N-terminus, the 343-residue chain is Undecaprenyl-diphosphatase 2 (343 aa).

The next 4 helical transmembrane spans lie at Leu21–Trp41, Pro57–Phe77, Leu104–His124, and Leu129–Ala149. The span at Val179–Pro193 shows a compositional bias: low complexity. The segment at Val179–Thr202 is disordered. Transmembrane regions (helical) follow at residues Ala225–Ile245, Phe265–Gly285, Gln294–Val314, and Leu322–Ile342.

It belongs to the UppP family.

It is found in the cell membrane. It carries out the reaction di-trans,octa-cis-undecaprenyl diphosphate + H2O = di-trans,octa-cis-undecaprenyl phosphate + phosphate + H(+). Functionally, catalyzes the dephosphorylation of undecaprenyl diphosphate (UPP). Confers resistance to bacitracin. This chain is Undecaprenyl-diphosphatase 2, found in Frankia alni (strain DSM 45986 / CECT 9034 / ACN14a).